The primary structure comprises 372 residues: L-selectin (372 aa).

A signal peptide spans 1-28 (MIFPRKCQSTQRDLWNIFKLWGWTMLCC). A propeptide spanning residues 29 to 38 (DFLAHHGTDC) is cleaved from the precursor. Residues 39 to 332 (WTYHYSENPM…FSMIKEGDYN (294 aa)) are Extracellular-facing. Residues 55–155 (RFCRENYTDL…ACHKPKAALC (101 aa)) form the C-type lectin domain. 10 cysteine pairs are disulfide-bonded: cysteine 57-cysteine 155, cysteine 128-cysteine 147, cysteine 128-cysteine 160, cysteine 160-cysteine 171, cysteine 165-cysteine 180, cysteine 182-cysteine 191, cysteine 197-cysteine 241, cysteine 227-cysteine 254, cysteine 259-cysteine 303, and cysteine 289-cysteine 316. 2 N-linked (GlcNAc...) asparagine glycosylation sites follow: asparagine 60 and asparagine 104. The Ca(2+) site is built by glutamate 118, asparagine 120, glutamate 126, asparagine 143, and aspartate 144. The 37-residue stretch at 156-192 (YTASCQPWSCSGHGECVEIINNYTCNCDVGYYGPQCQ) folds into the EGF-like domain. A glycan (N-linked (GlcNAc...) asparagine) is linked at asparagine 177. Sushi domains lie at 195-256 (IQCE…TCQV) and 257-318 (IQCE…ICQK). N-linked (GlcNAc...) asparagine glycosylation is found at asparagine 226, asparagine 232, asparagine 246, and asparagine 271. The helical transmembrane segment at 333 to 355 (PLFIPVAVIVTAFSGLAFIIWLA) threads the bilayer. At 356-372 (RRLKKGKKSKKSMDDPY) the chain is on the cytoplasmic side.

This sequence belongs to the selectin/LECAM family. As to quaternary structure, interaction with SELPLG/PSGL1 and PODXL2 is required for promoting recruitment and rolling of leukocytes. This interaction is dependent on the sialyl Lewis X glycan modification of SELPLG and PODXL2, and tyrosine sulfation modifications of SELPLG. Sulfation on 'Tyr-51' of SELPLG is important for L-selectin binding. Post-translationally, N-glycosylated.

The protein localises to the cell membrane. In terms of biological role, calcium-dependent lectin that mediates cell adhesion by binding to glycoproteins on neighboring cells. Mediates the adherence of lymphocytes to endothelial cells of high endothelial venules in peripheral lymph nodes. Promotes initial tethering and rolling of leukocytes in endothelia. This chain is L-selectin (SELL), found in Papio hamadryas (Hamadryas baboon).